The chain runs to 405 residues: Phosphopentomutase (405 aa).

Mn(2+)-binding residues include aspartate 10, aspartate 303, histidine 308, aspartate 344, histidine 345, and histidine 356.

The protein belongs to the phosphopentomutase family. Mn(2+) serves as cofactor.

The protein resides in the cytoplasm. It catalyses the reaction 2-deoxy-alpha-D-ribose 1-phosphate = 2-deoxy-D-ribose 5-phosphate. The catalysed reaction is alpha-D-ribose 1-phosphate = D-ribose 5-phosphate. The protein operates within carbohydrate degradation; 2-deoxy-D-ribose 1-phosphate degradation; D-glyceraldehyde 3-phosphate and acetaldehyde from 2-deoxy-alpha-D-ribose 1-phosphate: step 1/2. Isomerase that catalyzes the conversion of deoxy-ribose 1-phosphate (dRib-1-P) and ribose 1-phosphate (Rib-1-P) to deoxy-ribose 5-phosphate (dRib-5-P) and ribose 5-phosphate (Rib-5-P), respectively. The chain is Phosphopentomutase from Shewanella pealeana (strain ATCC 700345 / ANG-SQ1).